Reading from the N-terminus, the 366-residue chain is 3-dehydroquinate synthase (366 aa).

NAD(+) contacts are provided by residues Ser-74 to Lys-79, Gly-108 to Asp-112, Thr-132 to Thr-133, Lys-144, Lys-153, and Phe-171 to Thr-174. Residues Glu-186, His-249, and His-266 each contribute to the Zn(2+) site.

Belongs to the sugar phosphate cyclases superfamily. Dehydroquinate synthase family. Requires Co(2+) as cofactor. Zn(2+) is required as a cofactor. The cofactor is NAD(+).

Its subcellular location is the cytoplasm. It carries out the reaction 7-phospho-2-dehydro-3-deoxy-D-arabino-heptonate = 3-dehydroquinate + phosphate. It participates in metabolic intermediate biosynthesis; chorismate biosynthesis; chorismate from D-erythrose 4-phosphate and phosphoenolpyruvate: step 2/7. Its function is as follows. Catalyzes the conversion of 3-deoxy-D-arabino-heptulosonate 7-phosphate (DAHP) to dehydroquinate (DHQ). The protein is 3-dehydroquinate synthase of Geobacillus kaustophilus (strain HTA426).